The chain runs to 154 residues: UPF0178 protein YaiI (154 aa).

The protein belongs to the UPF0178 family.

The chain is UPF0178 protein YaiI from Escherichia fergusonii (strain ATCC 35469 / DSM 13698 / CCUG 18766 / IAM 14443 / JCM 21226 / LMG 7866 / NBRC 102419 / NCTC 12128 / CDC 0568-73).